We begin with the raw amino-acid sequence, 340 residues long: CaiB/baiF CoA-transferase family protein ZK892.4 (340 aa).

Catalysis depends on Asp-154, which acts as the Nucleophile.

This sequence belongs to the CoA-transferase III family.

In Caenorhabditis elegans, this protein is CaiB/baiF CoA-transferase family protein ZK892.4.